An 89-amino-acid chain; its full sequence is Small ribosomal subunit protein uS15 (89 aa).

The protein belongs to the universal ribosomal protein uS15 family. In terms of assembly, part of the 30S ribosomal subunit. Forms a bridge to the 50S subunit in the 70S ribosome, contacting the 23S rRNA.

In terms of biological role, one of the primary rRNA binding proteins, it binds directly to 16S rRNA where it helps nucleate assembly of the platform of the 30S subunit by binding and bridging several RNA helices of the 16S rRNA. Forms an intersubunit bridge (bridge B4) with the 23S rRNA of the 50S subunit in the ribosome. The sequence is that of Small ribosomal subunit protein uS15 from Leuconostoc citreum (strain KM20).